A 155-amino-acid polypeptide reads, in one-letter code: MAKGEGHILAQNKKARLDYHIVETVEAGIVLTGTEIKSVRAARIQLKDGFAQIKNGEAWLVNVHIAPFEQGNIWNADPERTRKLLLKKREITHLANELKGTGMTLVPLKVYLKDGFAKVLIGLAKGKHDYDKRETIKRRDQERDIKKQMKHYNAR.

Belongs to the SmpB family.

It localises to the cytoplasm. Functionally, required for rescue of stalled ribosomes mediated by trans-translation. Binds to transfer-messenger RNA (tmRNA), required for stable association of tmRNA with ribosomes. tmRNA and SmpB together mimic tRNA shape, replacing the anticodon stem-loop with SmpB. tmRNA is encoded by the ssrA gene; the 2 termini fold to resemble tRNA(Ala) and it encodes a 'tag peptide', a short internal open reading frame. During trans-translation Ala-aminoacylated tmRNA acts like a tRNA, entering the A-site of stalled ribosomes, displacing the stalled mRNA. The ribosome then switches to translate the ORF on the tmRNA; the nascent peptide is terminated with the 'tag peptide' encoded by the tmRNA and targeted for degradation. The ribosome is freed to recommence translation, which seems to be the essential function of trans-translation. The chain is SsrA-binding protein from Streptococcus pyogenes serotype M18 (strain MGAS8232).